The sequence spans 316 residues: Acetaldehyde dehydrogenase (316 aa).

11–14 (SGNI) provides a ligand contact to NAD(+). Cysteine 131 functions as the Acyl-thioester intermediate in the catalytic mechanism. NAD(+) is bound by residues 162 to 170 (SAGPGTRAN) and asparagine 289.

This sequence belongs to the acetaldehyde dehydrogenase family. As to quaternary structure, interacts with MhpE.

The enzyme catalyses acetaldehyde + NAD(+) + CoA = acetyl-CoA + NADH + H(+). Its pathway is aromatic compound metabolism; 3-phenylpropanoate degradation. Its function is as follows. Catalyzes the conversion of acetaldehyde to acetyl-CoA, using NAD(+) and coenzyme A. Is the final enzyme in the meta-cleavage pathway for the degradation of aromatic compounds. The protein is Acetaldehyde dehydrogenase of Klebsiella pneumoniae (strain 342).